Consider the following 441-residue polypeptide: Ribulose bisphosphate carboxylase large chain (441 aa).

Lys5 carries the post-translational modification N6,N6,N6-trimethyllysine. 2 residues coordinate substrate: Asn114 and Thr164. Lys166 serves as the catalytic Proton acceptor. Substrate is bound at residue Lys168. Residues Lys192, Asp194, and Glu195 each contribute to the Mg(2+) site. Residue Lys192 is modified to N6-carboxylysine. The active-site Proton acceptor is the His285. Positions 286, 318, and 370 each coordinate substrate.

This sequence belongs to the RuBisCO large chain family. Type I subfamily. As to quaternary structure, heterohexadecamer of 8 large chains and 8 small chains; disulfide-linked. The disulfide link is formed within the large subunit homodimers. Mg(2+) serves as cofactor. In terms of processing, the disulfide bond which can form in the large chain dimeric partners within the hexadecamer appears to be associated with oxidative stress and protein turnover.

The protein resides in the plastid. It is found in the chloroplast. It catalyses the reaction 2 (2R)-3-phosphoglycerate + 2 H(+) = D-ribulose 1,5-bisphosphate + CO2 + H2O. It carries out the reaction D-ribulose 1,5-bisphosphate + O2 = 2-phosphoglycolate + (2R)-3-phosphoglycerate + 2 H(+). Its function is as follows. RuBisCO catalyzes two reactions: the carboxylation of D-ribulose 1,5-bisphosphate, the primary event in carbon dioxide fixation, as well as the oxidative fragmentation of the pentose substrate in the photorespiration process. Both reactions occur simultaneously and in competition at the same active site. This chain is Ribulose bisphosphate carboxylase large chain, found in Pellaea andromedifolia (Coffee fern).